The chain runs to 419 residues: MLINKFKKDLKLKEYTDLTIVLKDDTCEIEMNVHKTVICIMCKYFENFIKFNSQTEKKSNDKLTVIVPNALITRDIIRNFYDKTSTNSEYPLWRYTLEKIMCRDFLMLDYDSEIIKDLEKIPSEGITLFLEVLSITNYEFSLMTLLKKNISKGYNFKNIPSKIIDELYSYTKPNIIVCMGNENNLELWNIETNKLINNIKLDKPFHHTTNIVCSQNESIIAISDGQTFGLINVLKNTCIYKTYQSKIKYSSSNDSDEDASETESEHNSETESEHNSETESEHNSETESKHNLETKIDLKYNVGNFIKFSRSHNKIIFERDNEIFLWKIIFFPNYECSSYDYNKKKYGCDYYNSYDKKKYKCVVNIDGFPNDKLLYAKKINNFNPKHIYTIYGIKGNEQKTIIFDVPIKIAKYLPMVKIS.

The 74-residue stretch at Thr16 to Glu89 folds into the BTB domain. Positions Ser250–His290 are disordered. Over residues Glu263–His290 the composition is skewed to basic and acidic residues.

Belongs to the mimivirus BTB/WD family.

This Acanthamoeba polyphaga (Amoeba) protein is Putative BTB/POZ domain-containing protein L85.